We begin with the raw amino-acid sequence, 419 residues long: MSLQATMTAMGQAARQGASALRVATPAQRTAALHAMAAAIRADAPAILAANAKDLEKAGAGGLTAPMVERLMLNPERLEDVAAGVEAVAAIPDPLGVETARWTRPNGLDIARVRTPIGVIAMIFESRPNVTADAAALCVRSGNAVILRGGSECIHSNLAIHAAIAKGLKAAGISSDAVQIVRTPDRDAVGAILGGLNRTIDLIIPRGGKSLVARVQAEARVAVLGHLEGLNHVFVHAAADPRKAVEIVLNAKMRRVSVCGSAETLLVDRAAAERLLPPIADALIKAGCELRGDGPSRAIEPTMKPAVEADWSTEYLAPVISVAVVDGVEGAAAHIAAYGSGHTDAIVTEDVAAAERFIALVDSAIVLVNASTQFADGGEFGFGAEIGIATDKLHARGPVGAEQLTTFKYVVRGTGQTRP.

This sequence belongs to the gamma-glutamyl phosphate reductase family.

It localises to the cytoplasm. It catalyses the reaction L-glutamate 5-semialdehyde + phosphate + NADP(+) = L-glutamyl 5-phosphate + NADPH + H(+). It functions in the pathway amino-acid biosynthesis; L-proline biosynthesis; L-glutamate 5-semialdehyde from L-glutamate: step 2/2. Its function is as follows. Catalyzes the NADPH-dependent reduction of L-glutamate 5-phosphate into L-glutamate 5-semialdehyde and phosphate. The product spontaneously undergoes cyclization to form 1-pyrroline-5-carboxylate. This Caulobacter sp. (strain K31) protein is Gamma-glutamyl phosphate reductase.